Here is a 127-residue protein sequence, read N- to C-terminus: Small ribosomal subunit protein uS11 (127 aa).

The protein belongs to the universal ribosomal protein uS11 family. Part of the 30S ribosomal subunit. Interacts with proteins S7 and S18. Binds to IF-3.

In terms of biological role, located on the platform of the 30S subunit, it bridges several disparate RNA helices of the 16S rRNA. Forms part of the Shine-Dalgarno cleft in the 70S ribosome. This is Small ribosomal subunit protein uS11 from Chlorobium chlorochromatii (strain CaD3).